We begin with the raw amino-acid sequence, 543 residues long: MVKAMEQEQETYKSRLFHFKNMNENSASRHVKSWSSDCAMRMDGSDNLDDDDNDMMMFRSQPGKCGSVDRPSLPIGGVTPNRNDKLPRVSSSDSMEALIILQAAMEQMKEKFSKLLLGEDMSGGGKGVSSALALSNAITNLAASAFGEQRRLEPMAVDRKTRWRREIGWLISVADYIVEFAPTQQTNKDGTSMEVMSTRQRTDLLCNIPALKKLDAMLLDCLDKFKDQDEFYYVKKDSPDSCETRNDEKWWLPAVKVPPNGLSEISRRFLQSQKECVNQVLKAAMAINAQVLSEMEIPESYLESLPKNGRASLGDVIYRMITVEMFDADQFLIEMDLSSEHKILDLKNRIEASIVIWKRKMVQKDTKSPWGSTVSIEKREQFEERAETILLLLKQGFPGISQSSLDISKIQFNRDVGLAILESYSRVLESLAHTVMSRIEDVLYADQLTQEPTNNAPSKNRYSLKENEKLREERLSFTEDMASGTLSDVMQWGNKNNEMKKESFFGDREKPLLSKVTGIMTNNKKSSYLDNLGAMRSPTARYS.

The interval 61–89 (QPGKCGSVDRPSLPIGGVTPNRNDKLPRV) is disordered. The PRONE domain maps to 95–456 (MEALIILQAA…QLTQEPTNNA (362 aa)).

Interacts with ARAC4/ROP2, ARAC3/ROP, ARAC9/ROP8, PHYA and PHYB. As to expression, highly expressed in elongating regions of roots and pollen grains. Expressed in flowers, and at lower levels in leaves and stems.

Its subcellular location is the cytoplasm. Guanine-nucleotide exchange factor (GEF) that acts as an activator of Rop (Rho of plants) GTPases by promoting the exchange of GDP for GTP. Functions as a light-signaling switch that functions in root growth and development through the activation of Rop in a phytochrome-dependent manner. May act as a negative regulator of phytochrome-mediated primary root development. The polypeptide is Rop guanine nucleotide exchange factor 11 (ROPGEF11) (Arabidopsis thaliana (Mouse-ear cress)).